The following is a 388-amino-acid chain: F-box protein At3g49510 (388 aa).

One can recognise an F-box domain in the interval 1-47 (MTTISDLSDDLVGDILSRVPFTSLISVRSTCKKWNALSKNQIFGRKT).

This is F-box protein At3g49510 from Arabidopsis thaliana (Mouse-ear cress).